The following is a 1017-amino-acid chain: Sodium/potassium-transporting ATPase subunit alpha-2 (1017 aa).

Residues 1-31 (MDGREYSPAATTSENGGGRRKQKEKELDELK) are disordered. Topologically, residues 1-82 (MDGREYSPAA…NALTPPPTTP (82 aa)) are cytoplasmic. Residues 77–79 (PPP) are interaction with phosphoinositide-3 kinase. Residues 83 to 103 (EWVKFCRQLFGGFSILLWIGA) traverse the membrane as a helical segment. Topologically, residues 104-126 (ILCFLAYGIQAAMEDEPSNDNLY) are extracellular. Residues 127–147 (LGVVLAAVVIVTGCFSYYQEA) form a helical membrane-spanning segment. Residues 148 to 283 (KSSKIMDSFK…VGRTPIAMEI (136 aa)) lie on the Cytoplasmic side of the membrane. The disordered stretch occupies residues 207–228 (KVDNSSLTGESEPQTRSPEFTH). The segment covering 209-224 (DNSSLTGESEPQTRSP) has biased composition (polar residues). The chain crosses the membrane as a helical span at residues 284 to 303 (EHFIRLITGVAVFLGLSFFI). Residues 304 to 315 (LSLILGYTWLEA) lie on the Extracellular side of the membrane. The helical transmembrane segment at 316–333 (VIFLIGIIVANVPEGLLA) threads the bilayer. Topologically, residues 334–766 (TVTVCLTLTA…EEGRLIFDNL (433 aa)) are cytoplasmic. Asp371 (4-aspartylphosphate intermediate) is an active-site residue. ATP is bound at residue Lys502. Positions 711 and 715 each coordinate Mg(2+). The helical transmembrane segment at 767–786 (KKSIAYTLTSNIPEITPFLL) threads the bilayer. Over 787–796 (FIIANIPLPL) the chain is Extracellular. Residues 797 to 817 (GTVTILCIDLGTDMVPAISLA) form a helical membrane-spanning segment. The Cytoplasmic portion of the chain corresponds to 818 to 837 (YEAAESDIMKRQPRNPRTDK). A helical transmembrane segment spans residues 838–860 (LVNERLISMAYGQIGMIQALGGF). Over 861–912 (FTYFVILAENGFLPARLLGVRLAWDDRSTNDLEDSYGQEWTYEQRKVVEFTC) the chain is Extracellular. The helical transmembrane segment at 913 to 932 (HTAFFASIVVVQWADLIICK) threads the bilayer. The Cytoplasmic segment spans residues 933–945 (TRRNSVFQQGMKN). At Ser937 the chain carries Phosphoserine; by PKA. A helical transmembrane segment spans residues 946–964 (KILIFGLLEETALAAFLSY). The Extracellular segment spans residues 965–979 (CPGMGVALRMYPLKV). Residues 980–1000 (TWWFCAFPYSLLIFAYDEVRK) form a helical membrane-spanning segment. Topologically, residues 1001 to 1017 (LILRRYPGGWVEKETYY) are cytoplasmic.

This sequence belongs to the cation transport ATPase (P-type) (TC 3.A.3) family. Type IIC subfamily. The sodium/potassium-transporting ATPase is composed of a catalytic alpha subunit, an auxiliary non-catalytic beta subunit and an additional regulatory subunit.

The protein resides in the membrane. Its subcellular location is the cell membrane. It catalyses the reaction K(+)(out) + Na(+)(in) + ATP + H2O = K(+)(in) + Na(+)(out) + ADP + phosphate + H(+). Functionally, this is the catalytic component of the active enzyme, which catalyzes the hydrolysis of ATP coupled with the exchange of sodium and potassium ions across the plasma membrane. This action creates the electrochemical gradient of sodium and potassium ions, providing the energy for active transport of various nutrients. In Gallus gallus (Chicken), this protein is Sodium/potassium-transporting ATPase subunit alpha-2 (ATP1A2).